Reading from the N-terminus, the 1450-residue chain is ABC transporter G family member 37 (1450 aa).

In terms of domain architecture, ABC transporter 1 spans 175–447 (VKLTGAKTHE…FEDCGFRCPE (273 aa)). Position 207–214 (207–214 (GPPSCGKT)) interacts with ATP. Positions 525–737 (ELFIACISRE…GEIGLSVNEF (213 aa)) constitute an ABC transmembrane type-2 1 domain. 6 helical membrane-spanning segments follow: residues 544–564 (VYIF…TVFI), 581–601 (ALFF…SMTA), 615–635 (FYPA…LSFF), 661–681 (FILL…LAAI), 687–707 (ASIT…GFVI), and 773–793 (LCAL…ALTF). The tract at residues 810-838 (SELQGTEKSTEDSSVRKKTTDSPVKTEEE) is disordered. A compositionally biased stretch (basic and acidic residues) spans 817–838 (KSTEDSSVRKKTTDSPVKTEEE). Positions 850-1103 (VTFQDLNYFV…IIEYFESVPE (254 aa)) constitute an ABC transporter 2 domain. An ATP-binding site is contributed by 895-902 (GVSGAGKT). Positions 1175 to 1389 (GQFKSILWKM…TLNGFISSQY (215 aa)) constitute an ABC transmembrane type-2 2 domain. A run of 7 helical transmembrane segments spans residues 1194-1214 (YNLM…ALFW), 1226-1246 (MFTV…NNCA), 1282-1302 (IPYI…MIGF), 1313-1333 (LYSM…LVSI), 1339-1359 (VAAI…GFLI), 1365-1385 (PGWW…NGFI), and 1422-1442 (VTAV…AFFV).

Belongs to the ABC transporter superfamily. ABCG family. PDR (TC 3.A.1.205) subfamily. In terms of tissue distribution, expressed in roots and, to a lower extent, in seedlings.

The protein localises to the cell membrane. Together with ABCG36, regulates auxin homeostasis and responses by playing a dual role in coumarin (and derivatives) and in the auxin precursor indole 3-butyric acid (IBA) efflux transport, thus influencing roots and root hairs development. Mediates coumarin exudation in the rhizosphere, especially in iron (Fe) deficient conditions, with a strong specificity for highly oxygenated compounds such as scopoletin and derivatives, dihydroxyscopoletin, esculetin, fraxin, fraxetin and esculin; these molecules improve plant Fe nutrition. Involved in the cellular detoxification of xenobiotics by promoting the excretion of some auxinic herbicides including 2,4-dichlorophenoxyacetic acid (2,4-D), 4-(2,4-dichlorophenoxy)butyric acid (2,4-DB) and other members of the phenoxyalkanoic acid family as well as the polar auxin transport inhibitor, napthylphthalamic acid (NPA). May be a general defense protein. This chain is ABC transporter G family member 37, found in Arabidopsis thaliana (Mouse-ear cress).